The sequence spans 161 residues: Vitamin K-dependent protein C (161 aa).

A Peptidase S1 domain is found at 1–161 (EKWELDLDIE…GCGLLHNYGV (161 aa)). The N-linked (GlcNAc...) asparagine glycan is linked to Asn17. Catalysis depends on Asp26, which acts as the Charge relay system. Asn82 carries N-linked (GlcNAc...) asparagine glycosylation. Intrachain disulfides connect Cys100-Cys114 and Cys125-Cys153. The active-site Charge relay system is the Ser129.

The protein belongs to the peptidase S1 family. Plasma; synthesized in the liver.

It is found in the secreted. It localises to the golgi apparatus. The protein resides in the endoplasmic reticulum. It catalyses the reaction Degradation of blood coagulation factors Va and VIIIa.. Functionally, protein C is a vitamin K-dependent serine protease that regulates blood coagulation by inactivating factors Va and VIIIa in the presence of calcium ions and phospholipids. Exerts a protective effect on the endothelial cell barrier function. This chain is Vitamin K-dependent protein C (PROC), found in Macaca mulatta (Rhesus macaque).